A 675-amino-acid chain; its full sequence is Methionine--tRNA ligase (675 aa).

Positions 15-25 (PYANGSIHLGH) match the 'HIGH' region motif. Residues Cys146, Cys149, Cys159, and Cys162 each contribute to the Zn(2+) site. A 'KMSKS' region motif is present at residues 332 to 336 (KMSKS). Lys335 is a binding site for ATP. Residues 573–675 (DFAKIDMRIA…SGAKPGHQVK (103 aa)) form the tRNA-binding domain.

The protein belongs to the class-I aminoacyl-tRNA synthetase family. MetG type 1 subfamily. Homodimer. Requires Zn(2+) as cofactor.

The protein resides in the cytoplasm. It catalyses the reaction tRNA(Met) + L-methionine + ATP = L-methionyl-tRNA(Met) + AMP + diphosphate. Its function is as follows. Is required not only for elongation of protein synthesis but also for the initiation of all mRNA translation through initiator tRNA(fMet) aminoacylation. In Proteus mirabilis (strain HI4320), this protein is Methionine--tRNA ligase.